The primary structure comprises 551 residues: Periplasmic [NiFe] hydrogenase large subunit (551 aa).

4 residues coordinate Ni(2+): Cys65, Cys68, Cys530, and Cys533. The propeptide occupies 537–551 (VIDPESNQVHKFRIL).

Belongs to the [NiFe]/[NiFeSe] hydrogenase large subunit family. In terms of assembly, heterodimer of a large and a small subunit. Ni(2+) is required as a cofactor.

Its subcellular location is the periplasm. The catalysed reaction is 2 Fe(III)-[cytochrome c3] + H2 = 2 Fe(II)-[cytochrome c3] + 2 H(+). This chain is Periplasmic [NiFe] hydrogenase large subunit (hydB), found in Megalodesulfovibrio gigas (Desulfovibrio gigas).